The following is a 101-amino-acid chain: Thylakoid-associated protein slr0729 (101 aa).

The protein resides in the cellular thylakoid membrane. The protein is Thylakoid-associated protein slr0729 of Synechocystis sp. (strain ATCC 27184 / PCC 6803 / Kazusa).